The chain runs to 524 residues: Indoleacetamide hydrolase (524 aa).

2 stretches are compositionally biased toward basic residues: residues 1–26 (MAKK…KATA) and 34–54 (AAKK…RRPK). The disordered stretch occupies residues 1 to 56 (MAKKTASKKKSVSRKVTKTSSKKATARKGAVAKAAKKSVKKAAPRKSATARRPKGP). Catalysis depends on charge relay system residues lysine 133 and serine 208. Serine 232 functions as the Acyl-ester intermediate in the catalytic mechanism.

Belongs to the amidase family.

The protein operates within plant hormone metabolism; auxin biosynthesis. Its function is as follows. Hydrolyzes indole-3-acetamide (IAM) into indole-3-acetic acid (IAA). This chain is Indoleacetamide hydrolase (bam), found in Bradyrhizobium diazoefficiens (strain JCM 10833 / BCRC 13528 / IAM 13628 / NBRC 14792 / USDA 110).